The chain runs to 157 residues: Lipoprotein signal peptidase (157 aa).

Helical transmembrane passes span 10-30 (FIFI…KYAI), 36-56 (YESS…FSLL), 58-78 (FLEG…FIFL), and 84-104 (LFKA…SNIL). Residues aspartate 114 and aspartate 131 contribute to the active site. A helical transmembrane segment spans residues 123 to 143 (DFAIFNFADVMIDVGVGVLLI).

Belongs to the peptidase A8 family.

It localises to the cell inner membrane. It carries out the reaction Release of signal peptides from bacterial membrane prolipoproteins. Hydrolyzes -Xaa-Yaa-Zaa-|-(S,diacylglyceryl)Cys-, in which Xaa is hydrophobic (preferably Leu), and Yaa (Ala or Ser) and Zaa (Gly or Ala) have small, neutral side chains.. It functions in the pathway protein modification; lipoprotein biosynthesis (signal peptide cleavage). In terms of biological role, this protein specifically catalyzes the removal of signal peptides from prolipoproteins. The polypeptide is Lipoprotein signal peptidase (Helicobacter acinonychis (strain Sheeba)).